The primary structure comprises 336 residues: NEDD4 family-interacting protein 2 (336 aa).

Disordered stretches follow at residues 1–24 (MARR…RGAP) and 37–156 (SAAA…SITV). The Cytoplasmic portion of the chain corresponds to 1 to 231 (MARRRSQRVC…ADQLRVGNDG (231 aa)). Residues 37-48 (SAAAAGATGSEE) are compositionally biased toward low complexity. Positions 78-99 (EHGEDSLSRKPDPEPGRMDHHQ) are enriched in basic and acidic residues. The interval 148-151 (PPPY) is interaction with NEDD4. The PPxY motif 1 signature appears at 148-151 (PPPY). Phosphotyrosine; by SRC occurs at positions 151, 167, 171, and 177. 2 consecutive short sequence motifs (PPxY motif) follow at residues 174–177 (PPPY) and 184–186 (PTY). A helical membrane pass occupies residues 232 to 252 (IFMLAFFMAFIFNWLGFCLSF). Topologically, residues 253 to 257 (CITNT) are extracellular. A helical transmembrane segment spans residues 258 to 278 (IAGRYGAICGFGLSLIKWILI). Topologically, residues 279–287 (VRFSDYFTG) are cytoplasmic. A helical membrane pass occupies residues 288-308 (YFNGQYWLWWIFLVLGLLLFF). Over 309 to 336 (RGFVNYLKVRNMSESMAAAHRTRYFFLL) the chain is Extracellular.

Forms heterodimers with NDFIP1. Interacts with HECT domain-containing E3 ubiquitin-protein ligases, including NEDD4. Interacts with NEDD4L. Interacts with PTEN. When phosphorylated at Tyr-167, interacts with SRC and LYN SH2 domain. May thus act as a scaffold that recruits SRC to NDFIP1, enhancing NDFIP1 phosphorylation. Interacts with SLC11A2/DMT1. May interact with phosphorylated EGFR. Interacts with KCNH2. Post-translationally, ubiquitinated by NEDD4 and ITCH. Also ubiquitinated by NEDD4L. Ubiquitination by NEDD4 or NEDD4L does not affect turnover. In terms of processing, undergoes transient tyrosine-phosphorylation following EGF stimulation, most probably catalyzed by SRC. Phosphorylation on Tyr-151, Tyr-171 and Tyr-177 are dependent on the phosphorylation on Tyr-167. Also phosphorylated by LYN and FYN. In terms of tissue distribution, expressed in brain, lung, heart, skeletal muscle, kidney, liver and placenta.

It localises to the endosome membrane. The protein localises to the golgi apparatus membrane. Its subcellular location is the endosome. The protein resides in the multivesicular body membrane. Activates HECT domain-containing E3 ubiquitin-protein ligases, including ITCH, NEDD4, NEDD4L, SMURF2, WWP1 and WWP2, and consequently modulates the stability of their targets. As a result, may control many cellular processes. Recruits ITCH, NEDD4 and SMURF2 to endosomal membranes. Negatively regulates KCNH2 potassium channel activity by decreasing its cell-surface expression and interfering with channel maturation through recruitment of NEDD4L to the Golgi apparatus and multivesicular body where it mediates KCNH2 degradation. May modulate EGFR signaling. Together with NDFIP1, limits the cytokine signaling and expansion of effector Th2 T-cells by promoting degradation of JAK1, probably by ITCH- and NEDD4L-mediated ubiquitination. This is NEDD4 family-interacting protein 2 (NDFIP2) from Homo sapiens (Human).